The sequence spans 60 residues: UPF0434 protein SG0997 (60 aa).

It belongs to the UPF0434 family.

This Sodalis glossinidius (strain morsitans) protein is UPF0434 protein SG0997.